A 243-amino-acid chain; its full sequence is Exosome complex component Rrp41 (243 aa).

The protein belongs to the RNase PH family. Rrp41 subfamily. In terms of assembly, component of the archaeal exosome complex. Forms a hexameric ring-like arrangement composed of 3 Rrp41-Rrp42 heterodimers. The hexameric ring associates with a trimer of Rrp4 and/or Csl4 subunits.

It localises to the cytoplasm. Catalytic component of the exosome, which is a complex involved in RNA degradation. Has 3'-&gt;5' exoribonuclease activity. Can also synthesize heteromeric RNA-tails. The protein is Exosome complex component Rrp41 of Cenarchaeum symbiosum (strain A).